A 448-amino-acid chain; its full sequence is Antizyme inhibitor 1 (448 aa).

It belongs to the Orn/Lys/Arg decarboxylase class-II family. ODC antizyme inhibitor subfamily. Monomer. Interacts with OAZ1 and OAZ3; this interaction disrupts the interaction between the antizyme and ODC1. Post-translationally, ubiquitinated, leading to its proteasomal degradation; a process that is reduced in presence of antizyme OAZ1. In terms of tissue distribution, expressed during testis development.

It is found in the nucleus. Antizyme inhibitor (AZI) protein that positively regulates ornithine decarboxylase (ODC) activity and polyamine uptake. AZI is an enzymatically inactive ODC homolog that counteracts the negative effect of ODC antizymes (AZs) OAZ1, OAZ2 and OAZ3 on ODC activity by competing with ODC for antizyme-binding. Inhibits antizyme-dependent ODC degradation and releases ODC monomers from their inactive complex with antizymes, leading to formation of the catalytically active ODC homodimer and restoring polyamine production. The polypeptide is Antizyme inhibitor 1 (Azin1) (Mus musculus (Mouse)).